The chain runs to 122 residues: Protein SPIRAL1-like 3 (122 aa).

Disordered stretches follow at residues 1–78 (MGKA…NNYF) and 96–122 (KVHAAPGGGSSLDYLFGGPSPAGSGNK). Over residues 32–61 (TMGTTTTTTTTTTTDGTGGRPITTTTTTVT) the composition is skewed to low complexity. At serine 73 the chain carries Phosphoserine.

This sequence belongs to the SPIRAL1 family. Ubiquitous. Preferentially expressed in above-ground organs.

Its function is as follows. Acts redundantly with SPR1 in maintaining the cortical microtubules organization essential for anisotropic cell growth. The protein is Protein SPIRAL1-like 3 (SP1L3) of Arabidopsis thaliana (Mouse-ear cress).